The following is a 358-amino-acid chain: Snurportin-1 (358 aa).

Residue M1 is modified to N-acetylmethionine. Disordered regions lie at residues 1–39 and 69–89; these read MEEL…SSLE and DWTG…EMDL. Positions 1 to 65 are necessary for interaction with KPNB1 and m3G-cap U1 and U5 snRNP import receptor activity; sequence MEELSQALAS…LDYVNHARRL (65 aa). The necessary for interaction with XPO1 stretch occupies residues 1-160; the sequence is MEELSQALAS…NRFSSLLPGG (160 aa). Composition is skewed to polar residues over residues 7-22 and 30-39; these read ALAS…NSTA and QYKSKYSSLE. In terms of domain architecture, IBB spans 11-73; sequence SFSVSQELNS…RLAEDDWTGM (63 aa). Position 75 is a phosphoserine (S75). The interval 128–130 is interaction with m3G-cap structure; it reads GKR. A necessary for binding to the m3G-cap structure region spans residues 210-329; sequence MNSKLPEEEG…DTKEKLTHKA (120 aa). Positions 315-341 are enriched in basic and acidic residues; the sequence is KRSQEDTKEKLTHKASENGHYELEHLS. Positions 315–358 are disordered; that stretch reads KRSQEDTKEKLTHKASENGHYELEHLSTPKLRSPPHSSESLMDS. Polar residues predominate over residues 349–358; that stretch reads PHSSESLMDS. The residue at position 351 (S351) is a Phosphoserine.

The protein belongs to the snurportin family. In terms of assembly, component of an import snRNP complex composed of KPNB1, SNUPN, SMN1 and ZNF259. Component of a nuclear export receptor complex composed of KPNB1, Ran, SNUPN and XPO1. Found in a trimeric export complex with SNUPN, Ran and XPO1. Interacts (via IBB domain) with KPNB1; the interaction is direct. Interacts with DDX20, IPO7, SMN1, SNRPB and XPO1. Interacts directly with XPO1. Its interaction with XPO1 and binding to m3G-cap U snRNPs appears to be mutually exclusive. Can form homomers.

Its subcellular location is the nucleus. The protein resides in the cytoplasm. Functionally, functions as an U snRNP-specific nuclear import adapter. Involved in the trimethylguanosine (m3G)-cap-dependent nuclear import of U snRNPs. Binds specifically to the terminal m3G-cap U snRNAs. This is Snurportin-1 (Snupn) from Rattus norvegicus (Rat).